Reading from the N-terminus, the 1322-residue chain is C-Jun-amino-terminal kinase-interacting protein 3 (1322 aa).

In terms of domain architecture, RH1 spans 12–100 (VVVYQDDYCS…LTQYEREKAL (89 aa)). Positions 50–80 (EVVKELMPLVVNVLENLDSVLSENQEHEVEL) are kinesin-binding domain (KBD); essential for its function in axon elongation. Positions 66-167 (LDSVLSENQE…KKEYNALHQR (102 aa)) form a coiled coil. 2 disordered regions span residues 183–211 (KMQQ…SLNV) and 245–317 (SSSY…NSRN). A JNK-binding domain (JBD); essential for its function in axon elongation region spans residues 210–226 (NVFPLADGMVRAQMGGK). Positions 261–270 (SSAAATPSTT) are enriched in low complexity. 3 positions are modified to phosphothreonine: Thr-266, Thr-276, and Thr-287. Residues 271-282 (GTKSNTPTSSVP) show a composition bias toward polar residues. The segment covering 305–315 (NNKRAREKRNS) has biased composition (basic residues). A phosphoserine mark is found at Ser-315, Ser-365, and Ser-366. The tract at residues 424 to 459 (QLLETKNALNVVKNDLIAKVDQLSGEQEVLKGELEA) is leucine zipper-like domain (LZ); essential for its function in axon elongation. Positions 443 to 534 (VDQLSGEQEV…KERLMELQEA (92 aa)) form a coiled coil. The tract at residues 459–515 (AAKQAKVKLENRIKELEEELKRVKSEAVTARREPREEVEDDKIPMAQRRRFTRVEMA) is interaction with NTRK2. An RH2 domain is found at 506–580 (RRRFTRVEMA…SPPPAKRSYP (75 aa)). 2 positions are modified to phosphoserine: Ser-588 and Ser-662. Disordered stretches follow at residues 704-754 (WKPN…EADA), 844-952 (PRSN…TTSS), and 1281-1307 (RIGD…LSKA). The span at 724 to 750 (LTCDREGEGEPKSTHPSPEKKKAKEVP) shows a compositional bias: basic and acidic residues. Residues 914 to 937 (APTQSSSTQPASENGSESDGSIVQ) show a composition bias toward polar residues. The segment covering 941–952 (EPSGESSATTSS) has biased composition (low complexity). A compositionally biased stretch (acidic residues) spans 1285-1294 (GEDDETEEGT).

Belongs to the JIP scaffold family. As to quaternary structure, forms homo- or heterooligomeric complexes. The central region of MAPK8IP3 interacts with the C-terminal of MAPK8IP2 but not MAPK8IP1. Binds specific components of the JNK signaling pathway namely MAPK8/JNK1, MAPK9/JNK2 and MAPK10/JNK3 to the N-terminal region, MAP2K4/MKK4 and MAP2K7/MKK7 to the central region and MAP3K11 to the C-terminal region. Binds the TPR motif-containing C-terminal of kinesin light chain, KLC1. Pre-assembled MAPK8IP1 scaffolding complexes are then transported as a cargo of kinesin, to the required subcellular location. Interacts with ROCK1 and this interaction is enhanced by ultraviolet-B (UVB) radiation. Interacts with SH3RF2. Interacts with NTRK3/TRKC. Interacts with NTRK2/TRKB. In terms of processing, phosphorylation by ROCK1 is crucial for the recruitment of JNK.

It is found in the cytoplasm. It localises to the golgi apparatus. Its subcellular location is the cytoplasmic vesicle. The protein resides in the cell projection. The protein localises to the growth cone. It is found in the axon. It localises to the dendrite. Its subcellular location is the perinuclear region. Its function is as follows. The JNK-interacting protein (JIP) group of scaffold proteins selectively mediates JNK signaling by aggregating specific components of the MAPK cascade to form a functional JNK signaling module. May function as a regulator of vesicle transport, through interactions with the JNK-signaling components and motor proteins. Promotes neuronal axon elongation in a kinesin- and JNK-dependent manner. Activates cofilin at axon tips via local activation of JNK, thereby regulating filopodial dynamics and enhancing axon elongation. Its binding to kinesin heavy chains (KHC), promotes kinesin-1 motility along microtubules and is essential for axon elongation and regeneration. Regulates cortical neuronal migration by mediating NTRK2/TRKB anterograde axonal transport during brain development. Acts as an adapter that bridges the interaction between NTRK2/TRKB and KLC1 and drives NTRK2/TRKB axonal but not dendritic anterograde transport, which is essential for subsequent BDNF-triggered signaling and filopodia formation. The polypeptide is C-Jun-amino-terminal kinase-interacting protein 3 (Mapk8ip3) (Rattus norvegicus (Rat)).